The following is a 59-amino-acid chain: Large ribosomal subunit protein uL30 (59 aa).

This sequence belongs to the universal ribosomal protein uL30 family. Part of the 50S ribosomal subunit.

This Pelotomaculum thermopropionicum (strain DSM 13744 / JCM 10971 / SI) protein is Large ribosomal subunit protein uL30.